The sequence spans 347 residues: Large ribosomal subunit protein uL3 (347 aa).

The disordered stretch occupies residues 325–347 (RPPKKKPPVERPQITYISRESKQ).

Belongs to the universal ribosomal protein uL3 family. As to quaternary structure, part of the 50S ribosomal subunit. Forms a cluster with proteins L14 and L24e.

Functionally, one of the primary rRNA binding proteins, it binds directly near the 3'-end of the 23S rRNA, where it nucleates assembly of the 50S subunit. The chain is Large ribosomal subunit protein uL3 from Thermococcus onnurineus (strain NA1).